A 354-amino-acid chain; its full sequence is UDP-N-acetylglucosamine--N-acetylmuramyl-(pentapeptide) pyrophosphoryl-undecaprenol N-acetylglucosamine transferase (354 aa).

Residues 15-17 (TGG), Asn127, Arg163, Ser191, Ile244, 263-268 (ALTVSE), and Gln288 each bind UDP-N-acetyl-alpha-D-glucosamine.

The protein belongs to the glycosyltransferase 28 family. MurG subfamily.

The protein resides in the cell inner membrane. It catalyses the reaction di-trans,octa-cis-undecaprenyl diphospho-N-acetyl-alpha-D-muramoyl-L-alanyl-D-glutamyl-meso-2,6-diaminopimeloyl-D-alanyl-D-alanine + UDP-N-acetyl-alpha-D-glucosamine = di-trans,octa-cis-undecaprenyl diphospho-[N-acetyl-alpha-D-glucosaminyl-(1-&gt;4)]-N-acetyl-alpha-D-muramoyl-L-alanyl-D-glutamyl-meso-2,6-diaminopimeloyl-D-alanyl-D-alanine + UDP + H(+). The protein operates within cell wall biogenesis; peptidoglycan biosynthesis. In terms of biological role, cell wall formation. Catalyzes the transfer of a GlcNAc subunit on undecaprenyl-pyrophosphoryl-MurNAc-pentapeptide (lipid intermediate I) to form undecaprenyl-pyrophosphoryl-MurNAc-(pentapeptide)GlcNAc (lipid intermediate II). The chain is UDP-N-acetylglucosamine--N-acetylmuramyl-(pentapeptide) pyrophosphoryl-undecaprenol N-acetylglucosamine transferase from Vibrio cholerae serotype O1 (strain ATCC 39315 / El Tor Inaba N16961).